The sequence spans 461 residues: ATP-dependent protease ATPase subunit HslU (461 aa).

ATP is bound by residues Ile18, Gly60–Glu65, Asp274, Glu339, and Arg411.

This sequence belongs to the ClpX chaperone family. HslU subfamily. As to quaternary structure, a double ring-shaped homohexamer of HslV is capped on each side by a ring-shaped HslU homohexamer. The assembly of the HslU/HslV complex is dependent on binding of ATP.

It is found in the cytoplasm. In terms of biological role, ATPase subunit of a proteasome-like degradation complex; this subunit has chaperone activity. The binding of ATP and its subsequent hydrolysis by HslU are essential for unfolding of protein substrates subsequently hydrolyzed by HslV. HslU recognizes the N-terminal part of its protein substrates and unfolds these before they are guided to HslV for hydrolysis. This Carboxydothermus hydrogenoformans (strain ATCC BAA-161 / DSM 6008 / Z-2901) protein is ATP-dependent protease ATPase subunit HslU.